A 461-amino-acid chain; its full sequence is tRNA modification GTPase MnmE (461 aa).

Residues arginine 23, glutamate 84, and arginine 123 each contribute to the (6S)-5-formyl-5,6,7,8-tetrahydrofolate site. Residues 216 to 383 (GARAALIGRP…LGATVARLLL (168 aa)) form the TrmE-type G domain. Asparagine 226 serves as a coordination point for K(+). GTP is bound by residues 226-231 (NAGKSS), 245-251 (TPIPGTT), and 270-273 (DTAG). Residue serine 230 coordinates Mg(2+). K(+) is bound by residues threonine 245, isoleucine 247, and threonine 250. Threonine 251 lines the Mg(2+) pocket. Position 461 (lysine 461) interacts with (6S)-5-formyl-5,6,7,8-tetrahydrofolate.

The protein belongs to the TRAFAC class TrmE-Era-EngA-EngB-Septin-like GTPase superfamily. TrmE GTPase family. Homodimer. Heterotetramer of two MnmE and two MnmG subunits. It depends on K(+) as a cofactor.

It localises to the cytoplasm. In terms of biological role, exhibits a very high intrinsic GTPase hydrolysis rate. Involved in the addition of a carboxymethylaminomethyl (cmnm) group at the wobble position (U34) of certain tRNAs, forming tRNA-cmnm(5)s(2)U34. The chain is tRNA modification GTPase MnmE from Roseiflexus sp. (strain RS-1).